We begin with the raw amino-acid sequence, 447 residues long: MIKIYDTMTRSLRKFVPLTENTVNMYVCGPTVYNYIHIGNARSAVAFDTIRRYFEYTGYQVNYISNFTDVDDKIIKAATQAGVSPKELSDRFIAAFIEDTKALGVKPATQNPRVMDYIAEIISFVESLIEKDFAYEADGDVYFRVEKSEHYAKLANKTLSELEVGASGRTDAETALKENPLDFALWKSAKAGEVSWDSPWGFGRPGWHIECSVMATEILGDTIDIHGGGADLEFPHHTNEIAQSEAKTGKTFANYWMHNGFVTVDNEKMSKSLGNFVTVHDMLQTVDGQVLRFFLATQQYRKPINFTEKAIHDAEINLKYLKNTLQQPLTETADEQELKQFVIAFQDAMDDDFNTANGITVVFDMAKWINSGSYTEPVKSAFEKMLAVFGIVFEEEVLEVDIEALIAKRQEARANRDFATADAIRDQLAAQGIKLLDTKDGVRWLRD.

C28 lines the Zn(2+) pocket. Residues 30–40 (PTVYNYIHIGN) carry the 'HIGH' region motif. Residues C211, H236, and E240 each contribute to the Zn(2+) site. The 'KMSKS' region signature appears at 268–272 (KMSKS). K271 serves as a coordination point for ATP.

Belongs to the class-I aminoacyl-tRNA synthetase family. In terms of assembly, monomer. Zn(2+) is required as a cofactor.

The protein resides in the cytoplasm. It carries out the reaction tRNA(Cys) + L-cysteine + ATP = L-cysteinyl-tRNA(Cys) + AMP + diphosphate. The protein is Cysteine--tRNA ligase of Streptococcus pyogenes serotype M6 (strain ATCC BAA-946 / MGAS10394).